A 324-amino-acid polypeptide reads, in one-letter code: Viral cathepsin (324 aa).

Positions 1–18 (MNKIVLYLLIYVGTFSAA) are cleaved as a signal peptide. The propeptide at 19–113 (YDLLKAPSYF…VVLNRPPDKG (95 aa)) is activation peptide. 3 cysteine pairs are disulfide-bonded: cysteine 134-cysteine 175, cysteine 168-cysteine 208, and cysteine 263-cysteine 311. The active site involves cysteine 137. Asparagine 159 carries N-linked (GlcNAc...) asparagine; by host glycosylation. Active-site residues include histidine 270 and asparagine 290.

The protein belongs to the peptidase C1 family. Synthesized as an inactive proenzyme and activated by proteolytic removal of the inhibitory propeptide.

The catalysed reaction is Endopeptidase of broad specificity, hydrolyzing substrates of both cathepsin L and cathepsin B.. Functionally, cysteine protease that plays an essential role in host liquefaction to facilitate horizontal transmission of the virus. May participate in the degradation of foreign protein expressed by the baculovirus system. In Choristoneura fumiferana defective polyhedrosis virus (Cfdef), this protein is Viral cathepsin (Vcath).